We begin with the raw amino-acid sequence, 162 residues long: Nucleotide-binding protein A2cp1_0112 (162 aa).

This sequence belongs to the YajQ family.

Nucleotide-binding protein. This Anaeromyxobacter dehalogenans (strain 2CP-1 / ATCC BAA-258) protein is Nucleotide-binding protein A2cp1_0112.